Consider the following 440-residue polypeptide: Probable carboxypeptidase AFUB_072730 (440 aa).

Residues 1–16 form the signal peptide; it reads MKPLTSLLLSAALSAA. N-linked (GlcNAc...) asparagine glycosylation is found at N87 and N149. Residue D165 coordinates Zn(2+). E197 acts as the Proton acceptor in catalysis. E198 is a Zn(2+) binding site. 2 N-linked (GlcNAc...) asparagine glycosylation sites follow: N353 and N372.

Belongs to the peptidase M20A family. It depends on Zn(2+) as a cofactor.

The protein localises to the secreted. The polypeptide is Probable carboxypeptidase AFUB_072730 (Aspergillus fumigatus (strain CBS 144.89 / FGSC A1163 / CEA10) (Neosartorya fumigata)).